We begin with the raw amino-acid sequence, 98 residues long: La1-like protein 13 (98 aa).

The N-terminal stretch at 1 to 24 (MERILKPVFLAILIVLSFSSQCMG) is a signal peptide. The residue at position 97 (Lys97) is a Lysine amide.

Belongs to the scorpion La1-like peptide family. Contains 4 disulfide bonds. As to expression, expressed by the venom gland.

The protein resides in the secreted. The protein is La1-like protein 13 of Urodacus yaschenkoi (Inland robust scorpion).